Reading from the N-terminus, the 89-residue chain is Ribonuclease P protein component 1 (89 aa).

This sequence belongs to the eukaryotic/archaeal RNase P protein component 1 family. Consists of a catalytic RNA component and at least 4-5 protein subunits.

It is found in the cytoplasm. The catalysed reaction is Endonucleolytic cleavage of RNA, removing 5'-extranucleotides from tRNA precursor.. In terms of biological role, part of ribonuclease P, a protein complex that generates mature tRNA molecules by cleaving their 5'-ends. The chain is Ribonuclease P protein component 1 from Thermoplasma volcanium (strain ATCC 51530 / DSM 4299 / JCM 9571 / NBRC 15438 / GSS1).